We begin with the raw amino-acid sequence, 72 residues long: Conotoxin im23a (72 aa).

Residues 1–22 (MIMRMTLTLFVLVVMTAASASG) form the signal peptide. Positions 23–28 (DALTEA) are excised as a propeptide. Intrachain disulfides connect Cys34–Cys41, Cys45–Cys55, and Cys56–Cys71.

The protein belongs to the conotoxin K superfamily. In terms of tissue distribution, expressed by the venom duct.

Its subcellular location is the secreted. Functionally, neurotoxin that induces excitatory symptoms in mice following intracranial administration. No symptoms are observed after intraperitoneal and intravenous (tail vein) injections. This is Conotoxin im23a from Conus imperialis (Imperial cone).